A 415-amino-acid polypeptide reads, in one-letter code: Serine hydroxymethyltransferase (415 aa).

Residues L117 and 121–123 (GHL) each bind (6S)-5,6,7,8-tetrahydrofolate. Residue K226 is modified to N6-(pyridoxal phosphate)lysine. Residues E241 and 349-351 (SPF) each bind (6S)-5,6,7,8-tetrahydrofolate.

The protein belongs to the SHMT family. In terms of assembly, homodimer. It depends on pyridoxal 5'-phosphate as a cofactor.

The protein resides in the cytoplasm. It carries out the reaction (6R)-5,10-methylene-5,6,7,8-tetrahydrofolate + glycine + H2O = (6S)-5,6,7,8-tetrahydrofolate + L-serine. It functions in the pathway one-carbon metabolism; tetrahydrofolate interconversion. The protein operates within amino-acid biosynthesis; glycine biosynthesis; glycine from L-serine: step 1/1. In terms of biological role, catalyzes the reversible interconversion of serine and glycine with tetrahydrofolate (THF) serving as the one-carbon carrier. This reaction serves as the major source of one-carbon groups required for the biosynthesis of purines, thymidylate, methionine, and other important biomolecules. Also exhibits THF-independent aldolase activity toward beta-hydroxyamino acids, producing glycine and aldehydes, via a retro-aldol mechanism. The chain is Serine hydroxymethyltransferase from Geotalea uraniireducens (strain Rf4) (Geobacter uraniireducens).